Reading from the N-terminus, the 202-residue chain is UMP-CMP kinase 3 (202 aa).

Glycine 24–threonine 29 is an ATP binding site. Residues serine 44–valine 73 are NMP. A ribonucleoside 5'-phosphate is bound by residues arginine 50, lysine 71 to valine 73, and glycine 98 to arginine 101. Asparagine 105 is a binding site for CMP. Positions glycine 136 to aspartate 144 are LID. An ATP-binding site is contributed by arginine 137. A ribonucleoside 5'-phosphate contacts are provided by arginine 141 and arginine 152. Lysine 180 contributes to the ATP binding site.

As to quaternary structure, monomer. Mg(2+) is required as a cofactor.

The protein localises to the cytoplasm. It localises to the nucleus. The enzyme catalyses CMP + ATP = CDP + ADP. It catalyses the reaction dCMP + ATP = dCDP + ADP. The catalysed reaction is UMP + ATP = UDP + ADP. Functionally, catalyzes the phosphorylation of pyrimidine nucleoside monophosphates at the expense of ATP. Plays an important role in de novo pyrimidine nucleotide biosynthesis. Has preference for UMP and CMP as phosphate acceptors. Does not act on dCMP and dUMP. The polypeptide is UMP-CMP kinase 3 (UMK3) (Arabidopsis thaliana (Mouse-ear cress)).